The chain runs to 523 residues: Tyrosine/DOPA decarboxylase 5 (523 aa).

A compositionally biased stretch (polar residues) spans 1–19 (MGSLPTDNLESMSICSQNP). 2 disordered regions span residues 1–20 (MGSL…QNPL) and 47–66 (SRSQ…APNH). N6-(pyridoxal phosphate)lysine is present on lysine 321.

Belongs to the group II decarboxylase family. As to quaternary structure, homodimer. Pyridoxal 5'-phosphate is required as a cofactor. Roots.

It carries out the reaction L-tyrosine + H(+) = tyramine + CO2. The enzyme catalyses L-dopa + H(+) = dopamine + CO2. It catalyses the reaction 5-hydroxy-L-tryptophan + H(+) = serotonin + CO2. Functionally, may play an important role in providing precursors for alkaloid synthesis in the roots and germinating seedlings. This Papaver somniferum (Opium poppy) protein is Tyrosine/DOPA decarboxylase 5 (TYDC5).